A 374-amino-acid chain; its full sequence is Fibrous sheath-interacting protein 1 (374 aa).

Disordered regions lie at residues 1–80 (MEVY…LEVL), 95–120 (EMTDQTTETSSDHEDSEEENEDPEMR), and 225–244 (EVGQEVTEDRRHTGASHSKS). 3 stretches are compositionally biased toward basic and acidic residues: residues 12 to 28 (PHSRGLEMDAEGSRDKS), 45 to 55 (DIIKGRLDEIS), and 65 to 77 (ENRRKSAEGHRSL). The stretch at 262-290 (SVFLTQQEKERIEDLLKDLEEELLEEPQL) forms a coiled coil.

Belongs to the FSIP1 family.

The polypeptide is Fibrous sheath-interacting protein 1 (fsip1) (Danio rerio (Zebrafish)).